A 611-amino-acid chain; its full sequence is Leukotriene A-4 hydrolase (611 aa).

Lysine 73 bears the N6-acetyllysine mark. A peptide-binding positions include 135–137 and 267–272; these read QCQ and PYGGME. Zn(2+) is bound at residue histidine 296. The Proton acceptor role is filled by glutamate 297. Histidine 300 and glutamate 319 together coordinate Zn(2+). An N6-acetyllysine modification is found at lysine 337. Catalysis depends on tyrosine 384, which acts as the Proton donor. Lysine 414 is modified (N6-acetyllysine). A Phosphoserine modification is found at serine 416. An a peptide-binding site is contributed by 564–566; that stretch reads RMK. The residue at position 573 (lysine 573) is an N6-acetyllysine.

The protein belongs to the peptidase M1 family. Monomer. Requires Zn(2+) as cofactor. In terms of processing, phosphorylation at Ser-416 inhibits leukotriene-A4 hydrolase activity.

The protein localises to the cytoplasm. The enzyme catalyses leukotriene A4 + H2O = leukotriene B4. It carries out the reaction (5S,6S)-epoxy-(18R)-hydroxy-(7E,9E,11Z,14Z,16E)-eicosapentaenoate + H2O = resolvin E1. It catalyses the reaction (5S,6S)-epoxy-(18S)-hydroxy-(7E,9E,11Z,14Z,16E)-eicosapentaenoate + H2O = 18S-resolvin E1. The catalysed reaction is Release of the N-terminal residue from a tripeptide.. It functions in the pathway lipid metabolism; leukotriene B4 biosynthesis. Inhibited by bestatin. Inhibited by captopril. The epoxide hydrolase activity is restrained by suicide inactivation that involves binding of LTA4 to Tyr-379. 4-(4-benzylphenyl)thiazol-2-amine (ARM1) selectively inhibits the epoxide hydrolase activity. In terms of biological role, bifunctional zinc metalloenzyme that comprises both epoxide hydrolase (EH) and aminopeptidase activities. Acts as an epoxide hydrolase to catalyze the conversion of LTA4 to the pro-inflammatory mediator leukotriene B4 (LTB4). Also has aminopeptidase activity, with high affinity for N-terminal arginines of various synthetic tripeptides. In addition to its pro-inflammatory EH activity, may also counteract inflammation by its aminopeptidase activity, which inactivates by cleavage another neutrophil attractant, the tripeptide Pro-Gly-Pro (PGP), a bioactive fragment of collagen generated by the action of matrix metalloproteinase-9 (MMP9) and prolylendopeptidase (PREPL). Involved also in the biosynthesis of resolvin E1 and 18S-resolvin E1 from eicosapentaenoic acid, two lipid mediators that show potent anti-inflammatory and pro-resolving actions. The sequence is that of Leukotriene A-4 hydrolase (Lta4h) from Rattus norvegicus (Rat).